The chain runs to 188 residues: Inosine triphosphate pyrophosphatase (188 aa).

Residue 9-14 coordinates ITP; that stretch reads TGNAKK. Glutamate 39 contacts Mg(2+). ITP is bound by residues lysine 51, 67–68, lysine 84, 143–146, lysine 166, and 171–172; these read DT, FGWD, and HR.

This sequence belongs to the HAM1 NTPase family. Homodimer. It depends on Mg(2+) as a cofactor. Mn(2+) is required as a cofactor.

It localises to the cytoplasm. The catalysed reaction is ITP + H2O = IMP + diphosphate + H(+). It carries out the reaction dITP + H2O = dIMP + diphosphate + H(+). It catalyses the reaction XTP + H2O = XMP + diphosphate + H(+). In terms of biological role, pyrophosphatase that hydrolyzes non-canonical purine nucleotides such as inosine triphosphate (ITP), deoxyinosine triphosphate (dITP) or xanthosine 5'-triphosphate (XTP) to their respective monophosphate derivatives. The enzyme does not distinguish between the deoxy- and ribose forms. Probably excludes non-canonical purines from RNA and DNA precursor pools, thus preventing their incorporation into RNA and DNA and avoiding chromosomal lesions. The sequence is that of Inosine triphosphate pyrophosphatase from Anopheles gambiae (African malaria mosquito).